The primary structure comprises 172 residues: C-phycocyanin beta chain (172 aa).

Asn-72 carries the post-translational modification N4-methylasparagine. Positions 82 and 153 each coordinate (2R,3E)-phycocyanobilin.

Belongs to the phycobiliprotein family. As to quaternary structure, heterodimer of an alpha and a beta subunit, which further assembles into trimers and the trimers into hexamers. The basic functional unit of phycobiliproteins is a ring-shaped hexamer formed from two back-to-back trimers contacting via the alpha chain subunits. The trimers are composed of alpha/beta subunit heterodimers arranged around a three-fold axis of symmetry. The phycoerythrins also contain a gamma subunit which is located in the center of the hexamer. In terms of processing, contains two covalently linked phycocyanobilin chromophores.

It is found in the plastid. The protein localises to the cyanelle thylakoid membrane. Light-harvesting photosynthetic bile pigment-protein from the phycobiliprotein complex (phycobilisome, PBS). Phycocyanin is the major phycobiliprotein in the PBS rod. This is C-phycocyanin beta chain (cpcB) from Cyanophora paradoxa.